We begin with the raw amino-acid sequence, 259 residues long: uncharacterized protein (259 aa).

This is an uncharacterized protein from Methanocaldococcus jannaschii (strain ATCC 43067 / DSM 2661 / JAL-1 / JCM 10045 / NBRC 100440) (Methanococcus jannaschii).